A 506-amino-acid chain; its full sequence is Proline--tRNA ligase (506 aa).

This sequence belongs to the class-II aminoacyl-tRNA synthetase family. ProS type 3 subfamily. As to quaternary structure, homodimer.

The protein localises to the cytoplasm. It carries out the reaction tRNA(Pro) + L-proline + ATP = L-prolyl-tRNA(Pro) + AMP + diphosphate. Its function is as follows. Catalyzes the attachment of proline to tRNA(Pro) in a two-step reaction: proline is first activated by ATP to form Pro-AMP and then transferred to the acceptor end of tRNA(Pro). The chain is Proline--tRNA ligase from Rhodopirellula baltica (strain DSM 10527 / NCIMB 13988 / SH1).